A 381-amino-acid chain; its full sequence is Cytochrome b (381 aa).

4 helical membrane passes run 34-54, 78-99, 114-134, and 179-199; these read FGSLLGLCLIIQILTGLFLAM, WLIRNIHANGASLFFICIYLHI, WNIGVILLFLLMATAFVGYVL, and FFAFHFLLPFLILALTVIHLL. Heme b is bound by residues histidine 84 and histidine 98. Residues histidine 183 and histidine 197 each contribute to the heme b site. An a ubiquinone-binding site is contributed by histidine 202. 4 helical membrane passes run 227-247, 289-309, 321-341, and 348-368; these read YKDLLGFFIMIFFLATLALFM, LGGVLALLFSIFILMLVPLLH, MTQIFFWLLVANFLILTWIGG, and FMMVGQIASISYFALFLIIMP.

This sequence belongs to the cytochrome b family. The cytochrome bc1 complex contains 3 respiratory subunits (MT-CYB, CYC1 and UQCRFS1), 2 core proteins (UQCRC1 and UQCRC2) and probably 6 low-molecular weight proteins. Heme b serves as cofactor.

The protein resides in the mitochondrion inner membrane. Its function is as follows. Component of the ubiquinol-cytochrome c reductase complex (complex III or cytochrome b-c1 complex) that is part of the mitochondrial respiratory chain. The b-c1 complex mediates electron transfer from ubiquinol to cytochrome c. Contributes to the generation of a proton gradient across the mitochondrial membrane that is then used for ATP synthesis. The polypeptide is Cytochrome b (mt-cyb) (Prionace glauca (Blue shark)).